A 3253-amino-acid polypeptide reads, in one-letter code: tRNA nuclease CdiA (3253 aa).

Residues 1–32 (MHQPPVRFPYRLLSYLISTIIAGQPLLPAVGA) form the signal peptide. Residues 36–322 (PQNGAGMDKA…AGGNLSVTGT (287 aa)) form a two-partner system transport domain (TPS) region. The interval 351-1384 (GELTAGQNAM…ITIRTGHLLN (1034 aa)) is FHA-1. Residues 1385–1656 (QREGINETKS…DLASGIVEGN (272 aa)) are receptor binding domain (RBD). The YP domain stretch occupies residues 1657–1841 (YPLPSGNNGY…LSPKDVTLQN (185 aa)). Residues 1842-1902 (GSIISGQNVH…GLKAMGDINN (61 aa)) are periplasmic FHA-1 repeat (pFR). The interval 1944-2548 (TYTGSIASVS…TSKYDSKQTS (605 aa)) is FHA-2. Disordered regions lie at residues 2228–2252 (GSSK…TIGS), 2362–2410 (TGDP…GKNR), 2483–2503 (GSEK…GKTV), and 2687–2712 (IRDR…DSIS). Polar residues-rich tracts occupy residues 2240 to 2252 (GTTQ…TIGS), 2368 to 2403 (TGVS…NLSV), and 2490 to 2503 (TEWT…GKTV). Positions 2888–2930 (SDLSEEQKQTISTLATVSAGLAGGLTGNSSASAAVGAQSGKNA) are pretoxin (PT) domain. Residues 2931–2934 (VDNN) carry the VDNN CT cleavage motif motif. The tract at residues 2931-3253 (VDNNYLSVSE…TGIVSNFHPK (323 aa)) is C-terminal effector domain (CT).

It in the N-terminal section; belongs to the CdiA toxin family. This sequence in the C-terminal section; belongs to the bacterial EndoU family. Forms a 1:1 complex with cognate immunity protein CdiI-STECO31. TRNase activity is metal-independent. serves as cofactor. In terms of processing, the CT domain is cleaved upon binding to receptor Tsx on target cells.

It is found in the secreted. The protein localises to the target cell. The protein resides in the target cell cytoplasm. Toxic component of a toxin-immunity protein module, which functions as a cellular contact-dependent growth inhibition (CDI) system. CDI modules allow bacteria to communicate with and inhibit the growth of closely related neighboring target bacteria in a contact-dependent fashion (target cell counts decrease 1000- to 10000-fold with this CDI). Uses outer membrane nucleoside transporter Tsx on target cells as a receptor. Gains access to the cytoplasm of target cells by using integral inner membrane protein PTS system glucose-specific EIICB component (ptsG). Targeting of the C-terminal domain (CT) domain (residues 2931-3253) in the absence of immunity protein inhibits cell growth and causes tRNA(UUC-Glu) cleavage; expression of cognate immunity protein CdiI-STECO31 neutralizes growth inhibition leaving tRNA(UUC-Glu) is intact, whereas non-cognate immunity proteins do not confer protection. The CT domain cleaves tRNA; it is most active against tRNA(UUC-Glu), but also has modest activity against tRNA(GUC-Asp), tRNA(UUG-Gln), tRNA(CCC-Gly), tRNA(UCC-Gly), tRNA(GCC-Gly), tRNA(UUU-Lys), tRNA(GGU-Thr) and tRNA(CCA-Trp); tRNA cleavage is inhibited by cognate immunity protein CdiI. Cleavage of tRNA(UUC-Glu) occurs in the anticodon loop between cytosine(37) and 2-methyladenosine(38) (C37-m2A38) and probably also occurs in the anticodon loop of other tRNAs as well. Functionally, the CdiA protein is thought to be exported from the cell through the central lumen of CdiB, the other half of its two-partner system (TPS). The TPS domain probably remains associated with CdiB while the FHA-1 domain forms an extended filament (33 nm long) with the receptor-binding domain (RBD) at its extremity; in the secretion arrested state the C-terminus of the RBD and YP domains form a hairpin-like structure as the FHA-2, PT and CT domains are periplasmic. The YP domain is probably responsible for this arrest at the point where it re-enters the host cell periplasm. Upon binding to a target cell outer membrane receptor (Tsx for this CDI) a signal is transmitted to activate secretion. The filament becomes about 5 nm longer, the rest of CdiA is secreted and the FHA-2 domain becomes stably associated with the target cell's outer membrane where it facilitates entry of the toxic CT domain into the target cell periplasm. From there the toxic CT domain is cleaved and gains access to the target cell cytoplasm via an inner membrane protein (PTS system glucose-specific EIICB component, ptsG for this CDI). In Escherichia coli (strain STEC_O31), this protein is tRNA nuclease CdiA.